The chain runs to 203 residues: Glycerol-3-phosphate acyltransferase (203 aa).

4 helical membrane passes run 6-26, 82-102, 118-138, and 141-161; these read LTLLMIVAAYLAGSVSSAVLV, AISLGLIAIAACLGHIYPIFF, APIGDDLAICLMASWVVLVLI, and YSSLAAIITALLAPLYTWWLD.

The protein belongs to the PlsY family. As to quaternary structure, probably interacts with PlsX.

Its subcellular location is the cell inner membrane. The catalysed reaction is an acyl phosphate + sn-glycerol 3-phosphate = a 1-acyl-sn-glycero-3-phosphate + phosphate. It functions in the pathway lipid metabolism; phospholipid metabolism. Its function is as follows. Catalyzes the transfer of an acyl group from acyl-phosphate (acyl-PO(4)) to glycerol-3-phosphate (G3P) to form lysophosphatidic acid (LPA). This enzyme utilizes acyl-phosphate as fatty acyl donor, but not acyl-CoA or acyl-ACP. This is Glycerol-3-phosphate acyltransferase from Shewanella sp. (strain MR-4).